A 346-amino-acid polypeptide reads, in one-letter code: Proto-oncogene serine/threonine-protein kinase mos (346 aa).

The region spanning 60–341 (VCLLQRLGAG…RPLLVDLTSL (282 aa)) is the Protein kinase domain. Residues 66–74 (LGAGGFGSV) and lysine 87 each bind ATP. Residue aspartate 201 is the Proton acceptor of the active site.

Belongs to the protein kinase superfamily. Ser/Thr protein kinase family.

It carries out the reaction L-seryl-[protein] + ATP = O-phospho-L-seryl-[protein] + ADP + H(+). The catalysed reaction is L-threonyl-[protein] + ATP = O-phospho-L-threonyl-[protein] + ADP + H(+). This chain is Proto-oncogene serine/threonine-protein kinase mos, found in Chlorocebus aethiops (Green monkey).